Here is a 389-residue protein sequence, read N- to C-terminus: Putative zinc finger CCCH domain-containing protein 10 (389 aa).

Positions Met1–Gln11 are enriched in polar residues. Residues Met1–Met110 form a disordered region. 2 stretches are compositionally biased toward basic and acidic residues: residues Glu12–Glu52 and Arg86–Met110. 2 consecutive C3H1-type zinc fingers follow at residues Arg131–Pro157 and Pro158–Glu190. The disordered stretch occupies residues Cys183–Lys296. Basic and acidic residues-rich tracts occupy residues Pro204–Ala243 and Arg251–Arg284.

The sequence is that of Putative zinc finger CCCH domain-containing protein 10 from Arabidopsis thaliana (Mouse-ear cress).